A 413-amino-acid chain; its full sequence is E3 ubiquitin ligase ICP22 (413 aa).

A disordered region spans residues 1 to 124 (MADIPPDPPA…PPRKSKRPRI (124 aa)). Over residues 62–76 (GDLRGGRRRSPRELG) the composition is skewed to basic and acidic residues. Positions 84-97 (SAESTTGTESEGTG) are enriched in low complexity. Tyrosine 189 is subject to Phosphotyrosine; by host. 2 disordered regions span residues 289-334 (LETN…SASG) and 370-390 (AERSGLPAPGACRATEAPERE). The segment covering 297–309 (SDDEISDATDSDD) has biased composition (acidic residues).

Belongs to the herpesviridae ICP22 family. In terms of processing, tyrosine phosphorylated.

The protein resides in the host nucleus. Its pathway is protein modification; protein ubiquitination. In terms of biological role, functions as an E3 ubiquitin ligase and plays a role in the inhibition of innate immunity by preventing IFN-mediated signaling. Induces the ubiquitination and degradation of host STAT1, STAT2 and IRF9, resulting in the blockade of ISGF3 nuclear translocation. This Human herpesvirus 2 (strain HG52) (HHV-2) protein is E3 ubiquitin ligase ICP22.